A 1088-amino-acid chain; its full sequence is DNA polymerase delta catalytic subunit (1088 aa).

It belongs to the DNA polymerase type-B family. In terms of assembly, heterodimer with subunits of 125 kDa and 50 kDa. The 125 kDa subunit contains the polymerase active site and most likely the active site for the 3'-5' exonuclease activity.

It localises to the nucleus. The catalysed reaction is DNA(n) + a 2'-deoxyribonucleoside 5'-triphosphate = DNA(n+1) + diphosphate. This polymerase possesses two enzymatic activities: DNA synthesis (polymerase) and an exonucleolytic activity that degrades single-stranded DNA in the 3'- to 5'-direction. The protein is DNA polymerase delta catalytic subunit (POLD1) of Glycine max (Soybean).